Consider the following 224-residue polypeptide: Ribose-5-phosphate isomerase A (224 aa).

Substrate-binding positions include 32–35, 85–88, and 98–101; these read TGST, DGAD, and KGGG. The active-site Proton acceptor is glutamate 107. Position 125 (lysine 125) interacts with substrate.

It belongs to the ribose 5-phosphate isomerase family. In terms of assembly, homodimer.

It catalyses the reaction aldehydo-D-ribose 5-phosphate = D-ribulose 5-phosphate. It functions in the pathway carbohydrate degradation; pentose phosphate pathway; D-ribose 5-phosphate from D-ribulose 5-phosphate (non-oxidative stage): step 1/1. In terms of biological role, catalyzes the reversible conversion of ribose-5-phosphate to ribulose 5-phosphate. This Pseudomonas putida (strain ATCC 700007 / DSM 6899 / JCM 31910 / BCRC 17059 / LMG 24140 / F1) protein is Ribose-5-phosphate isomerase A.